The sequence spans 794 residues: Phenylalanine--tRNA ligase beta subunit (794 aa).

The tRNA-binding domain maps to 39–148; the sequence is APAFDNVVVA…SDAPVGQAIR (110 aa). Positions 399–474 constitute a B5 domain; that stretch reads PVRKPVLLRT…RLYGYDNIPS (76 aa). Mg(2+) is bound by residues D452, D458, E461, and E462. An FDX-ACB domain is found at 700–793; that stretch reads SKFPPVIRDL…FEQAFGAQLR (94 aa).

The protein belongs to the phenylalanyl-tRNA synthetase beta subunit family. Type 1 subfamily. As to quaternary structure, tetramer of two alpha and two beta subunits. It depends on Mg(2+) as a cofactor.

The protein localises to the cytoplasm. It catalyses the reaction tRNA(Phe) + L-phenylalanine + ATP = L-phenylalanyl-tRNA(Phe) + AMP + diphosphate + H(+). This chain is Phenylalanine--tRNA ligase beta subunit, found in Dechloromonas aromatica (strain RCB).